The following is a 379-amino-acid chain: MLPSRKTKRVFSCDFTPGRKRRRCVVVPSSVSPVPENTTGADLLDSIPDDLVISILCKLGSTSRCPADFINVLLTCKRLKGLAMNPIVLSRLSPKAIAVKAHNWSEYSHRFLKRCVDAGSLEACYTLGMIRFYCLQNRGNGASLMAKAAISSHAPALYSLAVIQFNGSGGSKNDKDLRAGVALCARAAFLGHVDALRELGHCLQDGYGVPQNVSEGRRFLVQANARELAAVLSSGIQARSTWLSLSQPPPPVVPNHGQQTCPLLSDFGCNVPAPETHPANRFLADWFAVRGGDCPGDGLRLCSHAGCGRPETRKHEFRRCSVCGVVNYCSRACQALDWKLRHKMDCAPVQRWLEEGDGGEGNVQIDGNGNGDNVLLPMS.

In terms of domain architecture, F-box spans 41 to 92; sequence ADLLDSIPDDLVISILCKLGSTSRCPADFINVLLTCKRLKGLAMNPIVLSRL. H304, C307, C320, C323, C329, C333, H342, and C346 together coordinate Zn(2+). An MYND-type; atypical zinc finger spans residues 304–346; the sequence is HAGCGRPETRKHEFRRCSVCGVVNYCSRACQALDWKLRHKMDC. A disordered region spans residues 358 to 379; sequence GGEGNVQIDGNGNGDNVLLPMS.

Part of a SCF (ASK-cullin-F-box) protein ligase complex. Interacts with SKP1A/ASK1, SKP1B/ASK2, ASK4, ASK11 and ASK13.

It localises to the nucleus. It participates in protein modification; protein ubiquitination. In terms of biological role, component of SCF(ASK-cullin-F-box) E3 ubiquitin ligase complexes, which may mediate the ubiquitination and subsequent proteasomal degradation of target proteins. In Arabidopsis thaliana (Mouse-ear cress), this protein is F-box protein At1g67340.